Here is a 156-residue protein sequence, read N- to C-terminus: Cyclic pyranopterin monophosphate synthase (156 aa).

Substrate-binding positions include Leu73 to His75 and Met110 to Glu111. Residue Asp125 is part of the active site.

It belongs to the MoaC family. In terms of assembly, homohexamer; trimer of dimers.

The catalysed reaction is (8S)-3',8-cyclo-7,8-dihydroguanosine 5'-triphosphate = cyclic pyranopterin phosphate + diphosphate. The protein operates within cofactor biosynthesis; molybdopterin biosynthesis. Catalyzes the conversion of (8S)-3',8-cyclo-7,8-dihydroguanosine 5'-triphosphate to cyclic pyranopterin monophosphate (cPMP). This chain is Cyclic pyranopterin monophosphate synthase, found in Pseudomonas putida (strain W619).